A 563-amino-acid chain; its full sequence is MKSDLEIAREAHLDPIEKVAARAGIDEKYLEPYGRGVAKVDLDVVTHNRDHSCGKYVVVTAMTPTPLGEGKTTTAVGLAQGLEKIGKHSVLALRQPSMGPTFGIKGGAAGAGYSQVLPMEKLNLHLTGDFHAIGAAHNLLAAMIDNHLHQGNELDIEPHSISWRRVVDINDRALRNTIVGLGSRVDGVPRETGFDITAASEVGVILSLATSLSDLRARLGRIVIGYNRSKEPVSAEDLHAAGSMAVILKDALKPNLLQTTENSPVLVHAGPFGNIATGNSSVIADRVGIGCGDYLLTEAGFGADMGAERFFNIKCRIGGMRPDAAVLVATVRALKTHAGRYKVIPGKPLPPAMLEDNPDDVLAGAANLRKHIEIVREFGVSPIVALNVFPTDHPDEIDAVRKVAEAAGAHFASSTHVVDGGDGAVDLAHAVVAACDHKADFRYTYDLEDSLVEKLTKVATKVYGADGIDIAPAAAKELAHFEDLGYGTFPVVIAKTHLSLSHDPSLKGAPTGWRLPVREVRAAVGAGYIYAICGDMRTMPGLGRHPAAERIDIDDNGETIGLF.

Residue 65-72 (TPLGEGKT) coordinates ATP.

Belongs to the formate--tetrahydrofolate ligase family.

The enzyme catalyses (6S)-5,6,7,8-tetrahydrofolate + formate + ATP = (6R)-10-formyltetrahydrofolate + ADP + phosphate. It functions in the pathway one-carbon metabolism; tetrahydrofolate interconversion. The sequence is that of Formate--tetrahydrofolate ligase from Cutibacterium acnes (strain DSM 16379 / KPA171202) (Propionibacterium acnes).